Consider the following 370-residue polypeptide: Polyadenylate-binding protein 4-like (370 aa).

RRM domains lie at 10–88, 98–174, 190–267, and 293–369; these read ASLY…WSQR, GNVF…RFKN, TNVY…RAQK, and VKLY…LAQR.

The protein belongs to the polyadenylate-binding protein type-1 family.

May bind RNA. This is Polyadenylate-binding protein 4-like (PABPC4L) from Homo sapiens (Human).